The sequence spans 411 residues: Glycogen synthase kinase-3 homolog MsK-3 (411 aa).

The Protein kinase domain maps to 74–358 (YMAERVVGHG…ALEALVHPFY (285 aa)). ATP contacts are provided by residues 80–88 (VGHGSFGVV) and K103. D199 (proton acceptor) is an active-site residue. A Phosphotyrosine modification is found at Y234.

Belongs to the protein kinase superfamily. CMGC Ser/Thr protein kinase family. GSK-3 subfamily. Absent in leaves and petioles, very low levels are seen in the stems and roots while a moderate expression is seen in the nodes.

The catalysed reaction is L-seryl-[protein] + ATP = O-phospho-L-seryl-[protein] + ADP + H(+). It carries out the reaction L-threonyl-[protein] + ATP = O-phospho-L-threonyl-[protein] + ADP + H(+). The protein is Glycogen synthase kinase-3 homolog MsK-3 (MSK-3) of Medicago sativa (Alfalfa).